Consider the following 566-residue polypeptide: Arginine--tRNA ligase (566 aa).

The 'HIGH' region signature appears at 121–131 (ANPNGPFHIGH).

This sequence belongs to the class-I aminoacyl-tRNA synthetase family.

Its subcellular location is the cytoplasm. The enzyme catalyses tRNA(Arg) + L-arginine + ATP = L-arginyl-tRNA(Arg) + AMP + diphosphate. This Methanococcus maripaludis (strain DSM 14266 / JCM 13030 / NBRC 101832 / S2 / LL) protein is Arginine--tRNA ligase.